Here is an 87-residue protein sequence, read N- to C-terminus: Putative defensin-like protein 238 (87 aa).

The N-terminal stretch at 1–23 is a signal peptide; that stretch reads MRSITWFIVFCVFMFIALNHVKG. Disulfide bonds link Cys30–Cys87, Cys40–Cys65, Cys48–Cys78, and Cys63–Cys80.

It belongs to the DEFL family.

Its subcellular location is the secreted. This chain is Putative defensin-like protein 238 (SCRL16), found in Arabidopsis thaliana (Mouse-ear cress).